Here is a 240-residue protein sequence, read N- to C-terminus: tRNA pseudouridine synthase A (240 aa).

Aspartate 50 functions as the Nucleophile in the catalytic mechanism. Residue tyrosine 109 participates in substrate binding.

The protein belongs to the tRNA pseudouridine synthase TruA family. As to quaternary structure, homodimer.

It catalyses the reaction uridine(38/39/40) in tRNA = pseudouridine(38/39/40) in tRNA. Formation of pseudouridine at positions 38, 39 and 40 in the anticodon stem and loop of transfer RNAs. This chain is tRNA pseudouridine synthase A, found in Campylobacter jejuni (strain RM1221).